The following is a 938-amino-acid chain: LPS-assembly protein LptD (938 aa).

The first 33 residues, 1–33 (MAVKHPAFRKKFPLLVTGSLLALQPAFSLQSFA), serve as a signal peptide directing secretion. The disordered stretch occupies residues 52-96 (KTATSALPPRPQHSRSAVSTTSGSATATATKQEPAPVLVTESKGR). Over residues 65-81 (SRSAVSTTSGSATATAT) the composition is skewed to low complexity.

It belongs to the LptD family. As to quaternary structure, component of the lipopolysaccharide transport and assembly complex. Interacts with LptE and LptA.

The protein resides in the cell outer membrane. In terms of biological role, together with LptE, is involved in the assembly of lipopolysaccharide (LPS) at the surface of the outer membrane. In Ectopseudomonas mendocina (strain ymp) (Pseudomonas mendocina), this protein is LPS-assembly protein LptD.